A 348-amino-acid chain; its full sequence is D-erythrose-4-phosphate dehydrogenase (348 aa).

NAD(+)-binding positions include 12-13 (RI) and Arg-81. Substrate is bound by residues 154–156 (SCT), Arg-200, 213–214 (TK), and Arg-236. Catalysis depends on Cys-155, which acts as the Nucleophile. NAD(+) is bound at residue Asn-318.

The protein belongs to the glyceraldehyde-3-phosphate dehydrogenase family. Epd subfamily. As to quaternary structure, homotetramer.

The protein resides in the cytoplasm. It carries out the reaction D-erythrose 4-phosphate + NAD(+) + H2O = 4-phospho-D-erythronate + NADH + 2 H(+). Its pathway is cofactor biosynthesis; pyridoxine 5'-phosphate biosynthesis; pyridoxine 5'-phosphate from D-erythrose 4-phosphate: step 1/5. Catalyzes the NAD-dependent conversion of D-erythrose 4-phosphate to 4-phosphoerythronate. This chain is D-erythrose-4-phosphate dehydrogenase, found in Salmonella paratyphi B (strain ATCC BAA-1250 / SPB7).